The primary structure comprises 391 residues: 1-deoxy-D-xylulose 5-phosphate reductoisomerase (391 aa).

Threonine 17, glycine 18, serine 19, isoleucine 20, asparagine 47, and asparagine 130 together coordinate NADPH. Lysine 131 is a binding site for 1-deoxy-D-xylulose 5-phosphate. Residue glutamate 132 participates in NADPH binding. Mn(2+) is bound at residue aspartate 156. 1-deoxy-D-xylulose 5-phosphate-binding residues include serine 157, glutamate 158, serine 182, and histidine 205. Residue glutamate 158 coordinates Mn(2+). Glycine 211 contacts NADPH. Residues serine 218, asparagine 223, lysine 224, and glutamate 227 each contribute to the 1-deoxy-D-xylulose 5-phosphate site. Position 227 (glutamate 227) interacts with Mn(2+).

The protein belongs to the DXR family. Requires Mg(2+) as cofactor. Mn(2+) is required as a cofactor.

It carries out the reaction 2-C-methyl-D-erythritol 4-phosphate + NADP(+) = 1-deoxy-D-xylulose 5-phosphate + NADPH + H(+). It functions in the pathway isoprenoid biosynthesis; isopentenyl diphosphate biosynthesis via DXP pathway; isopentenyl diphosphate from 1-deoxy-D-xylulose 5-phosphate: step 1/6. In terms of biological role, catalyzes the NADPH-dependent rearrangement and reduction of 1-deoxy-D-xylulose-5-phosphate (DXP) to 2-C-methyl-D-erythritol 4-phosphate (MEP). This chain is 1-deoxy-D-xylulose 5-phosphate reductoisomerase, found in Rhizobium meliloti (strain 1021) (Ensifer meliloti).